The primary structure comprises 154 residues: uncharacterized protein (154 aa).

The signal sequence occupies residues 1–33 (MTKRGIQAFAGGIILATAVLAAVFYLTDEDQAA).

This is an uncharacterized protein from Bacillus subtilis (strain 168).